Reading from the N-terminus, the 1042-residue chain is MAVSCTPTLGLSSAPDEIQHPHIKFSEWKFKLFRVRSFEKTTEENQKEKNSSEGKPSLEQSPAVLDKASGQKPEVAPPAFKVHPKFSKKFHDDGKARDKAIHQANLRHLCRICGNSLKTDEHNRRYPVHGPVDSKTQGLLRKKEKKATSWPDLIAKVFRIDVKTDVDSIHPTEFCHNCWRIMHRKFSGAPCEVYFPRNATMEWHPHAPSCDICYTARRGLKRRNHQPNVQLSKKLKTVLDQARQARQRKRRVQARITSKEVMKMIANCSKIHLSTKLLAVDFPAHFVKSISCQICEHILADPVETSCKHVFCRICILRCLKVMGSYCPSCQYPCFPTDLESPVKSFLCILNSLIVKCSAPECNEEVSLEKYNHHVSSHKESRDTFVHINKGGRPRQHLLSLTRRAQKHRLRELKLQVKAFADKEEGGDVKSVCLTLFLLALRARNEHRQADELEAIMQGRGSGLQPAVCLAIRVNTFLSCSQYHKMYRTVKAITGRQIFQPLHALRNAEKVLLPGYHPFEWQPPLKNVSSSTDVGIIDGLSGLSSSVDDYPVDTIAKRFRYDSALVSALMDMEEDILEGMRSQDLEDYLNGPFTVVVKESCDGMGDVTEKHGSGPAVPEKAVRFSFTVMKITIAHGSQNVKVFEEAKPNSELCCKPLCLMLADESDHETLTAILSPLIAEREAMKSSELMLEMGGILRTFKFIFRGTGYDEKLVREVEGLEASGSVYICTLCDATRLEASQNLVFHSITRSHAENLERYEVWRSNPYHESVEELRDRVKGVSAKPFIETVPSIDALHCDIGNAAEFYKIFQLEIGEVYKNPSASKEERKRWQATLDKHLRKKMNLKPIMRMNGNFARKLMTIETVEAVCELIPSKERHEALRELMELYLKMKPVWRSSCPAKECPESLCQYSFNSQRFAELLSTKFKYRYEGKITNYFHKTLAHVPEIIERDGSIGAWASEGNESGNKLFRRFRKMNARQSKCYEMEDVLKHHWLYTSKYLQKFMNAHNAVKNSGFTMNSQVSLEDPLGIEDSLESQYSMEF.

Over residues 40-52 (KTTEENQKEKNSS) the composition is skewed to basic and acidic residues. The interval 40-80 (KTTEENQKEKNSSEGKPSLEQSPAVLDKASGQKPEVAPPAF) is disordered. Residue Lys233 forms a Glycyl lysine isopeptide (Lys-Gly) (interchain with G-Cter in ubiquitin) linkage. Residues Cys268, His272, Cys292, Cys295, His297, Cys307, His309, Cys312, Cys315, Cys327, Cys330, Cys357, Cys362, His374, and His378 each coordinate Zn(2+). An RING-type zinc finger spans residues 292–331 (CQICEHILADPVETSCKHVFCRICILRCLKVMGSYCPSCQ). The segment at 353–382 (LIVKCSAPECNEEVSLEKYNHHVSSHKESR) adopts an RAG1-type zinc-finger fold. Residues 391–458 (GGRPRQHLLS…QADELEAIMQ (68 aa)) constitute a DNA-binding region (NBD). Residues Asp602, Asp710, and Glu964 each coordinate a divalent metal cation.

The protein belongs to the RAG1 family. As to quaternary structure, homodimer. Component of the RAG complex composed of core components RAG1 and RAG2, and associated component HMGB1 or HMGB2. Interacts with DCAF1, leading to recruitment of the CUL4A-RBX1-DDB1-DCAF1/VPRBP complex to ubiquitinate proteins and limit error-prone repair during V(D)J recombination. Requires Mg(2+) as cofactor. It depends on Mn(2+) as a cofactor. Post-translationally, autoubiquitinated in the presence of CDC34/UBCH3.

The protein resides in the nucleus. It carries out the reaction S-ubiquitinyl-[E2 ubiquitin-conjugating enzyme]-L-cysteine + [acceptor protein]-L-lysine = [E2 ubiquitin-conjugating enzyme]-L-cysteine + N(6)-ubiquitinyl-[acceptor protein]-L-lysine.. Functionally, catalytic component of the RAG complex, a multiprotein complex that mediates the DNA cleavage phase during V(D)J recombination. V(D)J recombination assembles a diverse repertoire of immunoglobulin and T-cell receptor genes in developing B and T-lymphocytes through rearrangement of different V (variable), in some cases D (diversity), and J (joining) gene segments. In the RAG complex, RAG1 mediates the DNA-binding to the conserved recombination signal sequences (RSS) and catalyzes the DNA cleavage activities by introducing a double-strand break between the RSS and the adjacent coding segment. RAG2 is not a catalytic component but is required for all known catalytic activities. DNA cleavage occurs in 2 steps: a first nick is introduced in the top strand immediately upstream of the heptamer, generating a 3'-hydroxyl group that can attack the phosphodiester bond on the opposite strand in a direct transesterification reaction, thereby creating 4 DNA ends: 2 hairpin coding ends and 2 blunt, 5'-phosphorylated ends. The chromatin structure plays an essential role in the V(D)J recombination reactions and the presence of histone H3 trimethylated at 'Lys-4' (H3K4me3) stimulates both the nicking and haipinning steps. The RAG complex also plays a role in pre-B cell allelic exclusion, a process leading to expression of a single immunoglobulin heavy chain allele to enforce clonality and monospecific recognition by the B-cell antigen receptor (BCR) expressed on individual B-lymphocytes. The introduction of DNA breaks by the RAG complex on one immunoglobulin allele induces ATM-dependent repositioning of the other allele to pericentromeric heterochromatin, preventing accessibility to the RAG complex and recombination of the second allele. In addition to its endonuclease activity, RAG1 also acts as an E3 ubiquitin-protein ligase that mediates monoubiquitination of histone H3. Histone H3 monoubiquitination is required for the joining step of V(D)J recombination. Mediates polyubiquitination of KPNA1. This is V(D)J recombination-activating protein 1 (RAG1) from Oryctolagus cuniculus (Rabbit).